Consider the following 257-residue polypeptide: Protein CUSTOS (257 aa).

Positions 1–11 (MSDLESSSSSS) are enriched in low complexity. The interval 1 to 72 (MSDLESSSSS…HEQDGNELQT (72 aa)) is disordered. A compositionally biased stretch (basic and acidic residues) spans 32–41 (QRPRGPEKPG). Position 55 is a phosphoserine (Ser-55). The residue at position 73 (Thr-73) is a Phosphothreonine. Disordered regions lie at residues 120-157 (FTSI…RRCR) and 170-257 (SAIH…VPSN). Basic residues-rich tracts occupy residues 180–190 (KKKKRKLKKKA) and 227–237 (TKKKKRKKKTK). Residues 228–236 (KKKKRKKKT) carry the Nucleolar localization signal (NLS) motif.

This sequence belongs to the CUSTOS family.

The protein resides in the nucleus envelope. Plays a role in the regulation of Wnt signaling pathway during early development. This Bos taurus (Bovine) protein is Protein CUSTOS.